Here is a 312-residue protein sequence, read N- to C-terminus: Malate dehydrogenase (312 aa).

Residues 12–17 (GAGFTG) and aspartate 36 each bind NAD(+). Residues arginine 87 and arginine 93 each contribute to the substrate site. NAD(+)-binding positions include asparagine 100 and 123-125 (LTN). Asparagine 125 provides a ligand contact to substrate. Serine 149 bears the Phosphoserine mark. A substrate-binding site is contributed by arginine 156. Residue histidine 180 is the Proton acceptor of the active site.

The protein belongs to the LDH/MDH superfamily. MDH type 3 family.

The enzyme catalyses (S)-malate + NAD(+) = oxaloacetate + NADH + H(+). Functionally, catalyzes the reversible oxidation of malate to oxaloacetate. The protein is Malate dehydrogenase of Bacillus pumilus (strain SAFR-032).